The chain runs to 578 residues: mRNA-decapping enzyme 1B (578 aa).

A2 carries the N-acetylalanine modification. 2 positions are modified to phosphoserine: S144 and S145. Disordered regions lie at residues 187 to 222 (AICDNPKLIKPVPVRPSSSQRLQGPAPSKTSDPEPQ) and 246 to 265 (RTFAHHHHHHHQQQQETRPV). Residues 248–257 (FAHHHHHHHQ) show a composition bias toward basic residues. Phosphoserine is present on residues S274 and S335. At T380 the chain carries Phosphothreonine.

Belongs to the DCP1 family. Interacts with DCP1A.

It localises to the cytoplasm. The protein localises to the nucleus. It carries out the reaction a 5'-end (N(7)-methyl 5'-triphosphoguanosine)-ribonucleoside in mRNA + H2O = N(7)-methyl-GDP + a 5'-end phospho-ribonucleoside in mRNA + 2 H(+). In terms of biological role, may play a role in the degradation of mRNAs, both in normal mRNA turnover and in nonsense-mediated mRNA decay. May remove the 7-methyl guanine cap structure from mRNA molecules, yielding a 5'-phosphorylated mRNA fragment and 7m-GDP. This chain is mRNA-decapping enzyme 1B (Dcp1b), found in Mus musculus (Mouse).